Consider the following 355-residue polypeptide: Type II methyltransferase M.MthZI (355 aa).

This sequence belongs to the N(4)/N(6)-methyltransferase family. N(4) subfamily.

The catalysed reaction is a 2'-deoxycytidine in DNA + S-adenosyl-L-methionine = an N(4)-methyl-2'-deoxycytidine in DNA + S-adenosyl-L-homocysteine + H(+). A beta subtype methylase that recognizes the double-stranded sequence 5'-CTAG-3', methylates C-1 on both strands, and protects the DNA from cleavage by the MthZI endonuclease. This Methanothermobacter thermautotrophicus (Methanobacterium thermoformicicum) protein is Type II methyltransferase M.MthZI.